The chain runs to 325 residues: GMP reductase (325 aa).

Catalysis depends on Cys174, which acts as the Thioimidate intermediate. 203 to 226 (IIADGGLRTHGDIAKSIRFGATMV) provides a ligand contact to NADP(+).

Belongs to the IMPDH/GMPR family. GuaC type 2 subfamily.

The enzyme catalyses IMP + NH4(+) + NADP(+) = GMP + NADPH + 2 H(+). Functionally, catalyzes the irreversible NADPH-dependent deamination of GMP to IMP. It functions in the conversion of nucleobase, nucleoside and nucleotide derivatives of G to A nucleotides, and in maintaining the intracellular balance of A and G nucleotides. The sequence is that of GMP reductase from Staphylococcus epidermidis (strain ATCC 35984 / DSM 28319 / BCRC 17069 / CCUG 31568 / BM 3577 / RP62A).